The sequence spans 243 residues: Pyridoxine 5'-phosphate synthase (243 aa).

3-amino-2-oxopropyl phosphate is bound at residue asparagine 9. 1-deoxy-D-xylulose 5-phosphate is bound at residue 11–12; it reads DH. Arginine 20 is a 3-amino-2-oxopropyl phosphate binding site. Histidine 45 serves as the catalytic Proton acceptor. Residues arginine 47 and histidine 52 each contribute to the 1-deoxy-D-xylulose 5-phosphate site. The Proton acceptor role is filled by glutamate 72. Threonine 102 lines the 1-deoxy-D-xylulose 5-phosphate pocket. Catalysis depends on histidine 193, which acts as the Proton donor. 3-amino-2-oxopropyl phosphate-binding positions include glycine 194 and 215–216; that span reads GH.

It belongs to the PNP synthase family. As to quaternary structure, homooctamer; tetramer of dimers.

It localises to the cytoplasm. It catalyses the reaction 3-amino-2-oxopropyl phosphate + 1-deoxy-D-xylulose 5-phosphate = pyridoxine 5'-phosphate + phosphate + 2 H2O + H(+). It functions in the pathway cofactor biosynthesis; pyridoxine 5'-phosphate biosynthesis; pyridoxine 5'-phosphate from D-erythrose 4-phosphate: step 5/5. Functionally, catalyzes the complicated ring closure reaction between the two acyclic compounds 1-deoxy-D-xylulose-5-phosphate (DXP) and 3-amino-2-oxopropyl phosphate (1-amino-acetone-3-phosphate or AAP) to form pyridoxine 5'-phosphate (PNP) and inorganic phosphate. This is Pyridoxine 5'-phosphate synthase from Aliivibrio fischeri (strain ATCC 700601 / ES114) (Vibrio fischeri).